Here is a 267-residue protein sequence, read N- to C-terminus: Translation initiation factor 2 subunit alpha (267 aa).

Positions 12–83 constitute an S1 motif domain; sequence GEIVMATVER…KRKYANLSLR (72 aa).

This sequence belongs to the eIF-2-alpha family. In terms of assembly, heterotrimer composed of an alpha, a beta and a gamma chain.

Its function is as follows. eIF-2 functions in the early steps of protein synthesis by forming a ternary complex with GTP and initiator tRNA. This Methanopyrus kandleri (strain AV19 / DSM 6324 / JCM 9639 / NBRC 100938) protein is Translation initiation factor 2 subunit alpha.